A 164-amino-acid polypeptide reads, in one-letter code: 3-hydroxyacyl-[acyl-carrier-protein] dehydratase FabZ (164 aa).

Residue H61 is part of the active site.

This sequence belongs to the thioester dehydratase family. FabZ subfamily.

The protein localises to the cytoplasm. The enzyme catalyses a (3R)-hydroxyacyl-[ACP] = a (2E)-enoyl-[ACP] + H2O. In terms of biological role, involved in unsaturated fatty acids biosynthesis. Catalyzes the dehydration of short chain beta-hydroxyacyl-ACPs and long chain saturated and unsaturated beta-hydroxyacyl-ACPs. This is 3-hydroxyacyl-[acyl-carrier-protein] dehydratase FabZ from Ralstonia nicotianae (strain ATCC BAA-1114 / GMI1000) (Ralstonia solanacearum).